We begin with the raw amino-acid sequence, 679 residues long: UvrABC system protein B (679 aa).

The Helicase ATP-binding domain occupies 25 to 176 (YGVNQGKQYQ…NVRESLRELV (152 aa)). 38 to 45 (GATGTGKT) serves as a coordination point for ATP. Positions 91-114 (YYDYYQPEAYVPVSDTYIAKTSSV) match the Beta-hairpin motif. In terms of domain architecture, Helicase C-terminal spans 429 to 591 (QIDDLLDEIR…IIPKPAGKKP (163 aa)). The 36-residue stretch at 639–674 (PEIIDKLEGKMNLAAEELDFEQAAKLRDRIRQLRKK) folds into the UVR domain.

It belongs to the UvrB family. Forms a heterotetramer with UvrA during the search for lesions. Interacts with UvrC in an incision complex.

It is found in the cytoplasm. Its function is as follows. The UvrABC repair system catalyzes the recognition and processing of DNA lesions. A damage recognition complex composed of 2 UvrA and 2 UvrB subunits scans DNA for abnormalities. Upon binding of the UvrA(2)B(2) complex to a putative damaged site, the DNA wraps around one UvrB monomer. DNA wrap is dependent on ATP binding by UvrB and probably causes local melting of the DNA helix, facilitating insertion of UvrB beta-hairpin between the DNA strands. Then UvrB probes one DNA strand for the presence of a lesion. If a lesion is found the UvrA subunits dissociate and the UvrB-DNA preincision complex is formed. This complex is subsequently bound by UvrC and the second UvrB is released. If no lesion is found, the DNA wraps around the other UvrB subunit that will check the other stand for damage. This is UvrABC system protein B from Prochlorococcus marinus (strain MIT 9211).